The following is a 458-amino-acid chain: Chitin deacetylase 2 (458 aa).

Positions 1–51 are cleaved as a signal peptide; that stretch reads MIPSTAAAALLTLTAGVALAHPGCGGQEIGRRNVGGPMVYRRDVTDEASAA. N87, N99, and N125 each carry an N-linked (GlcNAc...) asparagine glycan. Residues 158–348 enclose the NodB homology domain; it reads MTWGLGFDDG…IKSAFSYIVP (191 aa). Catalysis depends on D165, which acts as the Proton acceptor. Acetate is bound at residue D165. D166 serves as a coordination point for Co(2+). A glycan (N-linked (GlcNAc...) asparagine) is linked at N169. The Co(2+) site is built by H215 and H219. Y256 provides a ligand contact to acetate. 2 N-linked (GlcNAc...) asparagine glycosylation sites follow: N271 and N309. Residue H322 is the Proton donor of the active site. N-linked (GlcNAc...) asparagine glycans are attached at residues N326, N354, N363, N378, and N393. Residues 382–430 form a disordered region; it reads STTQKDGSSSTNTSSSGSGSAAGSASATSSSDDSSSSGSASASSSSSNA. S427 carries GPI-anchor amidated serine lipidation. The propeptide at 428–458 is removed in mature form; the sequence is SNASSGALGMFDGLSGVGLVLSGVVAGVMLL. N429 carries an N-linked (GlcNAc...) asparagine glycan.

The protein belongs to the polysaccharide deacetylase family. Requires Co(2+) as cofactor. Post-translationally, glycosylated.

Its subcellular location is the secreted. It localises to the cell wall. The protein resides in the cell membrane. The catalysed reaction is [(1-&gt;4)-N-acetyl-beta-D-glucosaminyl](n) + n H2O = chitosan + n acetate. Its function is as follows. Hydrolyzes the N-acetamido groups of N-acetyl-D-glucosamine residues in chitin to form chitosan and acetate. Chitosan is required to anchor melanin to the cell wall, for maintenance of cell wall integrity, and for cytokinesis. This is Chitin deacetylase 2 from Cryptococcus neoformans var. neoformans serotype D (strain B-3501A) (Filobasidiella neoformans).